A 240-amino-acid chain; its full sequence is Orotidine 5'-phosphate decarboxylase (240 aa).

Substrate contacts are provided by residues Asp12, Lys34, 62–71 (DMKLFDIGNT), Thr117, Arg180, Gln189, Gly209, and Arg210. Lys64 functions as the Proton donor in the catalytic mechanism.

The protein belongs to the OMP decarboxylase family. Type 1 subfamily. Homodimer.

It catalyses the reaction orotidine 5'-phosphate + H(+) = UMP + CO2. Its pathway is pyrimidine metabolism; UMP biosynthesis via de novo pathway; UMP from orotate: step 2/2. Functionally, catalyzes the decarboxylation of orotidine 5'-monophosphate (OMP) to uridine 5'-monophosphate (UMP). This is Orotidine 5'-phosphate decarboxylase from Ruegeria pomeroyi (strain ATCC 700808 / DSM 15171 / DSS-3) (Silicibacter pomeroyi).